Here is a 121-residue protein sequence, read N- to C-terminus: MNALQEDTPPGPSTVFRPPTSSRPLETPHCREIRIGIAGITITLSLCGCANARAPTLRSATADNSESTGFKNVPDLRTDQPKPPSKKRSCDPSEYRVSELKESLTTTTPSRPRTARRCIRL.

Disordered regions lie at residues 1–28 (MNALQEDTPPGPSTVFRPPTSSRPLETP) and 57–121 (LRSA…CIRL). Polar residues predominate over residues 58 to 70 (RSATADNSESTGF). Basic and acidic residues predominate over residues 88-102 (RSCDPSEYRVSELKE).

Belongs to the gyrovirus apoptin family.

The protein resides in the host nucleus. Functionally, may act as transcriptional regulator. Induces apoptosis in infected cells. Element of infectious replication cycle. The protein is Apoptin (VP3) of Gallus gallus (Chicken).